Consider the following 273-residue polypeptide: Ciliary microtubule inner protein 2B (273 aa).

2 disordered regions span residues Thr59–Arg85 and Arg123–Pro164. Over residues Arg123–Leu159 the composition is skewed to basic and acidic residues.

This sequence belongs to the CIMIP2 family. Microtubule inner protein component of sperm flagellar doublet microtubules. As to expression, expressed in airway epithelial cells.

It localises to the cytoplasm. The protein resides in the cytoskeleton. The protein localises to the cilium axoneme. Its subcellular location is the flagellum axoneme. Functionally, microtubule inner protein (MIP) part of the dynein-decorated doublet microtubules (DMTs) in cilia axoneme, which is required for motile cilia beating. The polypeptide is Ciliary microtubule inner protein 2B (Cimip2b) (Mus musculus (Mouse)).